The following is a 280-amino-acid chain: Keratin, type I cytoskeletal 47 kDa (280 aa).

A head region spans residues 1-81 (MSFRSSSSYS…SSSFSSFGGN (81 aa)). The tract at residues 82–117 (DKQTMQNLNDRLASYLEKVRALEAANADLELKIREW) is coil 1A. One can recognise an IF rod domain in the interval 82–280 (DKQTMQNLND…RDAELWFNQK (199 aa)). Residues 118 to 139 (YEKQKGSGIGAASKDFSKYFEI) are linker 1. Residues 140–231 (ISDLRNKILF…KNHEEEMSIA (92 aa)) are coil 1B. Residues 232–254 (KGSAAGQVTVEMDAAPGVDLNKI) are linker 12. The segment at 255 to 280 (LSDMRADYETLAEKNRRDAELWFNQK) is coil 2.

This sequence belongs to the intermediate filament family. In terms of assembly, heterotetramer of two type I and two type II keratins.

The sequence is that of Keratin, type I cytoskeletal 47 kDa (xk81b1) from Xenopus laevis (African clawed frog).